A 370-amino-acid polypeptide reads, in one-letter code: DnaJ homolog subfamily B member 12 (370 aa).

M1 bears the N-acetylmethionine mark. The tract at residues 51-92 (NQKPQPAGDQPQPTEATHTTHRKAAGANTASANGEAGGESTK) is disordered. A J domain is found at 110-174 (DYYEILGVSR…EKRKQYDQFG (65 aa)). H185 is subject to Pros-methylhistidine. A helical transmembrane segment spans residues 242–262 (GGLGVFVQLMPILILILVSAL).

Belongs to the DnaJ family. DNAJB12/DNAJB14 subfamily. In terms of assembly, homodimer and homotetramer. Interacts (via J domain) with HSPA8/Hsc70. Forms a multiprotein complex, at least composed of DNAJB12, DNAJB14, HSPA8/Hsc70 and SGTA; interaction with DNAJB14 and HSPA8/Hsc70 is direct. Methylated at His-185 by METTL9.

The protein resides in the endoplasmic reticulum membrane. It localises to the nucleus membrane. Functionally, acts as a co-chaperone with HSPA8/Hsc70; required to promote protein folding and trafficking, prevent aggregation of client proteins, and promote unfolded proteins to endoplasmic reticulum-associated degradation (ERAD) pathway. Acts by determining HSPA8/Hsc70's ATPase and polypeptide-binding activities. Can also act independently of HSPA8/Hsc70: together with DNAJB14, acts as a chaperone that promotes maturation of potassium channels KCND2 and KCNH2 by stabilizing nascent channel subunits and assembling them into tetramers. While stabilization of nascent channel proteins is dependent on HSPA8/Hsc70, the process of oligomerization of channel subunits is independent of HSPA8/Hsc70. When overexpressed, forms membranous structures together with DNAJB14 and HSPA8/Hsc70 within the nucleus; the role of these structures, named DJANGOs, is still unclear. The sequence is that of DnaJ homolog subfamily B member 12 (DNAJB12) from Bos taurus (Bovine).